The primary structure comprises 287 residues: UPF0725 protein At1g19060 (287 aa).

This sequence belongs to the UPF0725 (EMB2204) family.

This is UPF0725 protein At1g19060 from Arabidopsis thaliana (Mouse-ear cress).